Reading from the N-terminus, the 209-residue chain is Chaperone protein TorD (209 aa).

It belongs to the TorD/DmsD family. TorD subfamily.

It localises to the cytoplasm. Functionally, involved in the biogenesis of TorA. Acts on TorA before the insertion of the molybdenum cofactor and, as a result, probably favors a conformation of the apoenzyme that is competent for acquiring the cofactor. This is Chaperone protein TorD from Shewanella massilia.